Consider the following 93-residue polypeptide: Phosphoribosyl-ATP pyrophosphatase (93 aa).

This sequence belongs to the PRA-PH family.

The protein localises to the cytoplasm. The enzyme catalyses 1-(5-phospho-beta-D-ribosyl)-ATP + H2O = 1-(5-phospho-beta-D-ribosyl)-5'-AMP + diphosphate + H(+). It participates in amino-acid biosynthesis; L-histidine biosynthesis; L-histidine from 5-phospho-alpha-D-ribose 1-diphosphate: step 2/9. The sequence is that of Phosphoribosyl-ATP pyrophosphatase from Mycolicibacterium gilvum (strain PYR-GCK) (Mycobacterium gilvum (strain PYR-GCK)).